A 302-amino-acid chain; its full sequence is 4-hydroxy-tetrahydrodipicolinate synthase (302 aa).

Threonine 55 provides a ligand contact to pyruvate. The active-site Proton donor/acceptor is the tyrosine 144. Lysine 172 serves as the catalytic Schiff-base intermediate with substrate. Valine 214 serves as a coordination point for pyruvate.

Belongs to the DapA family. Homotetramer; dimer of dimers.

It localises to the cytoplasm. It catalyses the reaction L-aspartate 4-semialdehyde + pyruvate = (2S,4S)-4-hydroxy-2,3,4,5-tetrahydrodipicolinate + H2O + H(+). Its pathway is amino-acid biosynthesis; L-lysine biosynthesis via DAP pathway; (S)-tetrahydrodipicolinate from L-aspartate: step 3/4. Catalyzes the condensation of (S)-aspartate-beta-semialdehyde [(S)-ASA] and pyruvate to 4-hydroxy-tetrahydrodipicolinate (HTPA). This Prochlorococcus marinus (strain MIT 9313) protein is 4-hydroxy-tetrahydrodipicolinate synthase.